The primary structure comprises 873 residues: Zinc fingers and homeoboxes protein 1 (873 aa).

The residue at position 36 (threonine 36) is a Phosphothreonine. Residues 41–63 (AKAESVSSDEEVHGSVDSDNQQN) form a disordered region. Residues serine 45, serine 47, and serine 48 each carry the phosphoserine modification. Over residues 50 to 63 (EEVHGSVDSDNQQN) the composition is skewed to basic and acidic residues. 2 consecutive C2H2-type zinc fingers follow at residues 70-93 (YECK…DSEH) and 102-125 (YVCV…LKYH). Lysine 159 is covalently cross-linked (Glycyl lysine isopeptide (Lys-Gly) (interchain with G-Cter in SUMO2)). The interval 198–247 (VHHNSAEGTSEEKENGVKASQEENAESVSSSALESNTSTSTINRVHPSPA) is disordered. Serine 202 carries the post-translational modification Phosphoserine. A compositionally biased stretch (low complexity) spans 223–238 (ESVSSSALESNTSTST). Residues 272–432 (NSNLLPKVLI…QTNVQKSQVP (161 aa)) form a required for dimerization region. Residues 272-564 (NSNLLPKVLI…SQQKQSWNPF (293 aa)) form a required for interaction with NFYA region. A DNA-binding region (homeobox 1) is located at residues 284-346 (NSIPTYNAAL…LKHGVSWTPE (63 aa)). Residues 429–456 (SQVPAAQPATDTKPATAAVPSSPSVRPE) are disordered. Residues lysine 441 and lysine 485 each participate in a glycyl lysine isopeptide (Lys-Gly) (interchain with G-Cter in SUMO2) cross-link. A DNA-binding region (homeobox 2) is located at residues 464–526 (SFGIRAKKTK…YNQRNSKSNQ (63 aa)). Disordered regions lie at residues 541–568 (DSSD…PDFA), 627–668 (DEKI…CKKT), and 731–767 (SSSL…KRMN). Residues 569–630 (PQKFKEKTAE…KTKALKDEKI (62 aa)) constitute a DNA-binding region (homeobox 3). A Glycyl lysine isopeptide (Lys-Gly) (interchain with G-Cter in SUMO2) cross-link involves residue lysine 629. Position 648 is a phosphoserine (serine 648). The homeobox 4 DNA-binding region spans 660 to 722 (GTGKICKKTP…YAWKNGNLKW (63 aa)). Residues 734 to 768 (LNGLSSLRRRGRGRPKGRGRGRPRGRPRGGKRMNT) are required for nuclear localization. Over residues 740-764 (LRRRGRGRPKGRGRGRPRGRPRGGK) the composition is skewed to basic residues. At serine 774 the chain carries Phosphoserine. Positions 777 to 832 (KFKTGTAILKDYYLKHKFLNEQDLDELVNRSHMGYEQVREWFAERQRRSELGIELF) form a DNA-binding region, homeobox 5. The tract at residues 829–873 (IELFEENEEEDEVVDDQEEDEEETDDSDTWEPPRHVKRKLSKSDD) is disordered. The span at 831 to 857 (LFEENEEEDEVVDDQEEDEEETDDSDT) shows a compositional bias: acidic residues. The segment at 831–873 (LFEENEEEDEVVDDQEEDEEETDDSDTWEPPRHVKRKLSKSDD) is required for repressor activity. Basic residues predominate over residues 863 to 873 (HVKRKLSKSDD).

The protein belongs to the ZHX family. In terms of assembly, forms homodimers. Heterodimer (via HD1 domain) with ZHX2 (via HD1 domain). Also forms a heterodimer with ZHX3 which is a prerequisite for repressor activity. Interacts with ATF7IP and NFYA. Interacts (via homeobox domains) with DNMT3B (via PWWP domain). As to expression, widely expressed with highest levels in brain.

It localises to the nucleus. Acts as a transcriptional repressor. Increases DNMT3B-mediated repressive transcriptional activity when DNMT3B is tethered to DNA. May link molecule between DNMT3B and other co-repressor proteins. In Mus musculus (Mouse), this protein is Zinc fingers and homeoboxes protein 1 (Zhx1).